Consider the following 212-residue polypeptide: Nuclear phosphoprotein UL3 homolog (212 aa).

The protein belongs to the alphaherpesvirinae HHV-1 UL3 family. Phosphorylated.

Its subcellular location is the host nucleus. This chain is Nuclear phosphoprotein UL3 homolog, found in Equus caballus (Horse).